The primary structure comprises 276 residues: Ribosomal RNA small subunit methyltransferase A (276 aa).

The S-adenosyl-L-methionine site is built by asparagine 19, leucine 21, glycine 46, glutamate 71, aspartate 94, and asparagine 117.

The protein belongs to the class I-like SAM-binding methyltransferase superfamily. rRNA adenine N(6)-methyltransferase family. RsmA subfamily.

Its subcellular location is the cytoplasm. The catalysed reaction is adenosine(1518)/adenosine(1519) in 16S rRNA + 4 S-adenosyl-L-methionine = N(6)-dimethyladenosine(1518)/N(6)-dimethyladenosine(1519) in 16S rRNA + 4 S-adenosyl-L-homocysteine + 4 H(+). Its function is as follows. Specifically dimethylates two adjacent adenosines (A1518 and A1519) in the loop of a conserved hairpin near the 3'-end of 16S rRNA in the 30S particle. May play a critical role in biogenesis of 30S subunits. The sequence is that of Ribosomal RNA small subunit methyltransferase A from Burkholderia ambifaria (strain ATCC BAA-244 / DSM 16087 / CCUG 44356 / LMG 19182 / AMMD) (Burkholderia cepacia (strain AMMD)).